A 759-amino-acid polypeptide reads, in one-letter code: Putative ATP-dependent DNA helicase YjcD (759 aa).

The segment at 68 to 121 (ACEPKPSKEGKKEDDQESGVIRLPKGKAIAADPSPAVTEWHRPRSIKPGTPFVP) is disordered. Basic and acidic residues predominate over residues 69–81 (CEPKPSKEGKKED). Positions 134 to 413 (VGLNTDQLKA…IYLTANYRST (280 aa)) constitute a UvrD-like helicase ATP-binding domain. ATP contacts are provided by residues 158–163 (GSGKTR) and R411. The region spanning 414-676 (HPIVSSADIV…QLMTIHRSKG (263 aa)) is the UvrD-like helicase C-terminal domain.

Belongs to the helicase family. UvrD subfamily.

It localises to the cytoplasm. The catalysed reaction is Couples ATP hydrolysis with the unwinding of duplex DNA by translocating in the 3'-5' direction.. The enzyme catalyses ATP + H2O = ADP + phosphate + H(+). Functionally, may be involved in the generation of recombinogenic substrates for the subsequent action of RecA. This is Putative ATP-dependent DNA helicase YjcD (yjcD) from Bacillus subtilis (strain 168).